We begin with the raw amino-acid sequence, 222 residues long: Ornithine decarboxylase antizyme 1 (222 aa).

It belongs to the ODC antizyme family. As to quaternary structure, interacts with ODC1 and thereby sterically blocks ODC homodimerization. Forms a ternary complex with PSMB4 and OAZ1 before PSMB4 is incorporated into the 20S proteasome. Interacts with AZIN2; this interaction disrupts the interaction between the antizyme and ODC1. Interacts with FAM171A1.

Functionally, ornithine decarboxylase (ODC) antizyme protein that negatively regulates ODC activity and intracellular polyamine biosynthesis and uptake in response to increased intracellular polyamine levels. Binds to ODC monomers, inhibiting the assembly of the functional ODC homodimer, and targets the monomers for ubiquitin-independent proteolytic destruction by the 26S proteasome. Triggers ODC degradation by inducing the exposure of a cryptic proteasome-interacting surface of ODC. Stabilizes AZIN2 by interfering with its ubiquitination. Also inhibits cellular uptake of polyamines by inactivating the polyamine uptake transporter. SMAD1/OAZ1/PSMB4 complex mediates the degradation of the CREBBP/EP300 repressor SNIP1. Involved in the translocation of AZIN2 from ER-Golgi intermediate compartment (ERGIC) to the cytosol. The protein is Ornithine decarboxylase antizyme 1 (OAZ1) of Mesocricetus auratus (Golden hamster).